Reading from the N-terminus, the 471-residue chain is Collagenase 3 (471 aa).

Positions 1–19 are cleaved as a signal peptide; sequence MHPGVLAAFLFLSWTHCRA. The propeptide at 20-103 is activation peptide; the sequence is LPLPSGGDED…PRCGVPDVGE (84 aa). The Cysteine switch motif lies at 94 to 101; that stretch reads PRCGVPDV. Cysteine 96 contacts Zn(2+). Residue asparagine 117 is glycosylated (N-linked (GlcNAc...) asparagine). Residue aspartate 128 coordinates Ca(2+). The N-linked (GlcNAc...) asparagine glycan is linked to asparagine 152. Aspartate 162 contributes to the Ca(2+) binding site. Histidine 172 and aspartate 174 together coordinate Zn(2+). The segment at 176-246 is interaction with TIMP2; sequence YPFDGPSGLL…GALMFPIYTY (71 aa). Ca(2+) contacts are provided by aspartate 179, glycine 180, serine 182, and leucine 184. Histidine 187 is a Zn(2+) binding site. Ca(2+)-binding residues include asparagine 194, glycine 196, and aspartate 198. Histidine 200 provides a ligand contact to Zn(2+). Ca(2+)-binding residues include aspartate 202, aspartate 203, and glutamate 205. Histidine 222 serves as a coordination point for Zn(2+). Glutamate 223 is a catalytic residue. Positions 226, 232, and 240 each coordinate Zn(2+). A disordered region spans residues 263–284; it reads QSLYGPGDEDPNPKHPKTPDKC. An interaction with collagen region spans residues 268–471; that stretch reads PGDEDPNPKH…VMPANSILWC (204 aa). Over residues 273–284 the composition is skewed to basic and acidic residues; it reads PNPKHPKTPDKC. Hemopexin repeat units follow at residues 281–330, 331–377, 379–427, and 428–471; these read PDKC…WPEL, PNRI…GLPK, VKKI…FPGI, and GDKV…ILWC. An intrachain disulfide couples cysteine 284 to cysteine 471. Residues aspartate 291, isoleucine 293, aspartate 335, and alanine 337 each contribute to the Ca(2+) site. Tyrosine 366 is modified (phosphotyrosine; by PKDCC). Residues serine 383, alanine 385, aspartate 432, and valine 434 each contribute to the Ca(2+) site.

The protein belongs to the peptidase M10A family. As to quaternary structure, monomer. Interacts with TIMP1, TIMP2 and TIMP3. Binds (via the C-terminal region) to collagen. Ca(2+) serves as cofactor. It depends on Zn(2+) as a cofactor. Post-translationally, the proenzyme is activated by removal of the propeptide; this cleavage can be effected by other matrix metalloproteinases, such as MMP2, MMP3 and MMP14 and may involve several cleavage steps. Cleavage can also be autocatalytic, after partial maturation by another protease or after treatment with 4-aminophenylmercuric acetate (APMA) (in vitro). In terms of processing, N-glycosylated. Tyrosine phosphorylated by PKDCC/VLK. In terms of tissue distribution, detected in fetal cartilage and calvaria, in chondrocytes of hypertrophic cartilage in vertebrae and in the dorsal end of ribs undergoing ossification, as well as in osteoblasts and periosteal cells below the inner periosteal region of ossified ribs. Detected in chondrocytes from in joint cartilage that have been treated with TNF and IL1B, but not in untreated chondrocytes. Detected in T lymphocytes. Detected in breast carcinoma tissue.

The protein resides in the secreted. It localises to the extracellular space. It is found in the extracellular matrix. Its activity is regulated as follows. Inhibited by TIMP1, TIMP2 and TIMP3. Inhibited by acetohydroxamic acid and other zinc chelators. Plays a role in the degradation of extracellular matrix proteins including fibrillar collagen, fibronectin, TNC and ACAN. Cleaves triple helical collagens, including type I, type II and type III collagen, but has the highest activity with soluble type II collagen. Can also degrade collagen type IV, type XIV and type X. May also function by activating or degrading key regulatory proteins, such as TGFB1 and CCN2. Plays a role in wound healing, tissue remodeling, cartilage degradation, bone development, bone mineralization and ossification. Required for normal embryonic bone development and ossification. Plays a role in the healing of bone fractures via endochondral ossification. Plays a role in wound healing, probably by a mechanism that involves proteolytic activation of TGFB1 and degradation of CCN2. Plays a role in keratinocyte migration during wound healing. May play a role in cell migration and in tumor cell invasion. This chain is Collagenase 3 (MMP13), found in Homo sapiens (Human).